The following is a 67-amino-acid chain: Bowman-Birk type proteinase inhibitor A6 (67 aa).

Disulfide bonds link C9–C66, C10–C29, C13–C62, C16–C27, C36–C43, and C40–C54.

The protein belongs to the Bowman-Birk serine protease inhibitor family. In terms of tissue distribution, expressed in bulb (at protein level).

In terms of biological role, serine protease inhibitor. Strongly inhibits trypsin (Ki = 4 nM) and elastase (Ki = 4.8 nM). Also inhibits chymotrypsin with a Ki of 22 nM. Does not inhibit bacterial subtilisin. The polypeptide is Bowman-Birk type proteinase inhibitor A6 (Hyacinthus orientalis (Common hyacinth)).